A 492-amino-acid chain; its full sequence is Dipeptide permease D (492 aa).

13 consecutive transmembrane segments (helical) span residues 14 to 34 (VVALQIWEYFSFYGMRALLIL), 49 to 69 (ALFSAYCSLVYVTPILGGYLA), 91 to 111 (LVLGASETAPVFLYLSLAIIV), 138 to 158 (GGFSLMYAAGNIGSIIAPIAC), 167 to 187 (WAMGFALAAIGMVAGLVIFLC), 212 to 232 (NWGWLLVLLVTAPLLIAVLFW), 236 to 256 (SVYALIVATVIGLAVLARIYL), 269 to 289 (LIVVLTAFSLLFWAFAQQGGS), 312 to 332 (MFQSVNAFAVMLCGMVLAWLV), 344 to 364 (IWGKFALGLGLMSAGFCILTL), 379 to 399 (LMVLGLAVMGFAELFIDPVAM), 413 to 433 (VLTGIYMLLSGAIANYLAGVI), and 458 to 478 (VFSQITWGALACVGVVLVIWL).

Belongs to the major facilitator superfamily. Proton-dependent oligopeptide transporter (POT/PTR) (TC 2.A.17) family. DtpD subfamily.

It localises to the cell inner membrane. Probable proton-dependent permease that transports dipeptides. In Klebsiella pneumoniae (strain 342), this protein is Dipeptide permease D.